Consider the following 85-residue polypeptide: uncharacterized protein (85 aa).

It localises to the mitochondrion. This is an uncharacterized protein from Paramecium tetraurelia.